The chain runs to 127 residues: Evasin-4 (127 aa).

Residues 1 to 23 form the signal peptide; sequence MAFKYWFVFAAVLYARQWLSTKC. Cystine bridges form between C50-C69, C65-C112, C86-C117, and C107-C126. N54, N64, N70, N77, N83, N106, and N114 each carry an N-linked (GlcNAc...) asparagine glycan.

Belongs to the evasin C8 family. As to quaternary structure, monomer.

It is found in the secreted. Its function is as follows. Salivary chemokine-binding protein which has chemokine-neutralizing activity and binds to host chemokines CCL1, CCL3, CCL5, CCL7, CCL8, CCL11, CCL14, CCL15, CCL16, CCL17, CCL18, CCL19, CCL21, CCL22, CCL23, CCL24, CCL25 and CCL26 with nanomolar affinity. Binds to CCL3 and CCL5 with 1:1 stoichiometry. Although binding to CCL25 is observed, does not inhibit CCL25-induced chemotaxis. Has been shown to reduce cardiac injury and inflammation in mice through its anti-CCL5 activity. The sequence is that of Evasin-4 from Rhipicephalus sanguineus (Brown dog tick).